The primary structure comprises 268 residues: Ribosome maturation factor RimP (268 aa).

2 disordered regions span residues 1-41 and 223-268; these read MGSA…GRGG and LVEP…EMTR. Residues 32–41 show a composition bias toward low complexity; the sequence is PSGSARGRGG. The segment covering 248–257 has biased composition (basic and acidic residues); it reads ESNDDGREAG.

Belongs to the RimP family.

The protein resides in the cytoplasm. Required for maturation of 30S ribosomal subunits. This Frankia casuarinae (strain DSM 45818 / CECT 9043 / HFP020203 / CcI3) protein is Ribosome maturation factor RimP.